We begin with the raw amino-acid sequence, 380 residues long: Cytochrome b (380 aa).

4 helical membrane passes run 34-54 (FGSLLAVCFMTQIITGLLLAM), 78-99 (WLIRNLHANGASFFFICIYLHI), 114-134 (WNTGVILLLTLMATAFVGYVL), and 179-199 (FFALHFLLPFVIAGITIIHLT). The heme b site is built by H84 and H98. H183 and H197 together coordinate heme b. A ubiquinone is bound at residue H202. Helical transmembrane passes span 227-247 (IKDILGLTLMLTPLLTLALFS), 289-309 (LGGVLALAASVLILLLIPFLH), 321-341 (FSQLLFWLLVANLLILTWVGS), and 348-368 (FIIIGQLASLSYFTTLLILFP).

The protein belongs to the cytochrome b family. As to quaternary structure, the cytochrome bc1 complex contains 11 subunits: 3 respiratory subunits (MT-CYB, CYC1 and UQCRFS1), 2 core proteins (UQCRC1 and UQCRC2) and 6 low-molecular weight proteins (UQCRH/QCR6, UQCRB/QCR7, UQCRQ/QCR8, UQCR10/QCR9, UQCR11/QCR10 and a cleavage product of UQCRFS1). This cytochrome bc1 complex then forms a dimer. The cofactor is heme b.

The protein resides in the mitochondrion inner membrane. Component of the ubiquinol-cytochrome c reductase complex (complex III or cytochrome b-c1 complex) that is part of the mitochondrial respiratory chain. The b-c1 complex mediates electron transfer from ubiquinol to cytochrome c. Contributes to the generation of a proton gradient across the mitochondrial membrane that is then used for ATP synthesis. This Numida meleagris (Helmeted guineafowl) protein is Cytochrome b (MT-CYB).